The sequence spans 497 residues: Aspartyl/glutamyl-tRNA(Asn/Gln) amidotransferase subunit B (497 aa).

Belongs to the GatB/GatE family. GatB subfamily. As to quaternary structure, heterotrimer of A, B and C subunits.

It carries out the reaction L-glutamyl-tRNA(Gln) + L-glutamine + ATP + H2O = L-glutaminyl-tRNA(Gln) + L-glutamate + ADP + phosphate + H(+). It catalyses the reaction L-aspartyl-tRNA(Asn) + L-glutamine + ATP + H2O = L-asparaginyl-tRNA(Asn) + L-glutamate + ADP + phosphate + 2 H(+). In terms of biological role, allows the formation of correctly charged Asn-tRNA(Asn) or Gln-tRNA(Gln) through the transamidation of misacylated Asp-tRNA(Asn) or Glu-tRNA(Gln) in organisms which lack either or both of asparaginyl-tRNA or glutaminyl-tRNA synthetases. The reaction takes place in the presence of glutamine and ATP through an activated phospho-Asp-tRNA(Asn) or phospho-Glu-tRNA(Gln). This is Aspartyl/glutamyl-tRNA(Asn/Gln) amidotransferase subunit B from Cutibacterium acnes (strain DSM 16379 / KPA171202) (Propionibacterium acnes).